A 142-amino-acid chain; its full sequence is Small heat shock protein IbpB (142 aa).

The region spanning 26 to 137 is the sHSP domain; that stretch reads SGESQSFPPY…PPQRIAINER (112 aa).

This sequence belongs to the small heat shock protein (HSP20) family. In terms of assembly, homodimer. Forms homomultimers of about 100-150 subunits at optimal growth temperatures. Conformation changes to oligomers at high temperatures or high ionic concentrations. The decrease in size of the multimers is accompanied by an increase in chaperone activity.

It is found in the cytoplasm. Its function is as follows. Associates with aggregated proteins, together with IbpA, to stabilize and protect them from irreversible denaturation and extensive proteolysis during heat shock and oxidative stress. Aggregated proteins bound to the IbpAB complex are more efficiently refolded and reactivated by the ATP-dependent chaperone systems ClpB and DnaK/DnaJ/GrpE. Its activity is ATP-independent. This is Small heat shock protein IbpB from Salmonella typhi.